Reading from the N-terminus, the 594-residue chain is UvrABC system protein C (594 aa).

In terms of domain architecture, GIY-YIG spans N13–I99. In terms of domain architecture, UVR spans D205–I240.

The protein belongs to the UvrC family. Interacts with UvrB in an incision complex.

Its subcellular location is the cytoplasm. Functionally, the UvrABC repair system catalyzes the recognition and processing of DNA lesions. UvrC both incises the 5' and 3' sides of the lesion. The N-terminal half is responsible for the 3' incision and the C-terminal half is responsible for the 5' incision. The protein is UvrABC system protein C of Helicobacter pylori (strain P12).